A 374-amino-acid chain; its full sequence is Pectate lyase 3 (374 aa).

The signal sequence occupies residues 1–22; it reads MKYLLPSAAAGLLLLAAQPTMA. A disulfide bridge links Cys-93 with Cys-176. Ca(2+)-binding residues include Asp-150, Asp-152, Glu-187, and Asp-191. The active site involves Arg-239. An intrachain disulfide couples Cys-350 to Cys-373.

It belongs to the polysaccharide lyase 1 family. PLADES subfamily. It depends on Ca(2+) as a cofactor.

The protein localises to the secreted. It carries out the reaction Eliminative cleavage of (1-&gt;4)-alpha-D-galacturonan to give oligosaccharides with 4-deoxy-alpha-D-galact-4-enuronosyl groups at their non-reducing ends.. The protein operates within glycan metabolism; pectin degradation; 2-dehydro-3-deoxy-D-gluconate from pectin: step 2/5. In terms of biological role, involved in maceration and soft-rotting of plant tissue. In Pectobacterium carotovorum (Erwinia carotovora), this protein is Pectate lyase 3 (pel3).